The sequence spans 205 residues: Ribosome maturation factor RimP (205 aa).

Residues 1 to 12 are compositionally biased toward polar residues; it reads MSNAEAQASSDH. 2 disordered regions span residues 1-24 and 186-205; these read MSNA…APAH and FSHL…SEEA.

Belongs to the RimP family.

It is found in the cytoplasm. Its function is as follows. Required for maturation of 30S ribosomal subunits. The sequence is that of Ribosome maturation factor RimP from Pseudarthrobacter chlorophenolicus (strain ATCC 700700 / DSM 12829 / CIP 107037 / JCM 12360 / KCTC 9906 / NCIMB 13794 / A6) (Arthrobacter chlorophenolicus).